A 325-amino-acid polypeptide reads, in one-letter code: G-protein coupled receptor E6 (325 aa).

7 consecutive transmembrane segments (helical) span residues 45-65, 71-91, 106-126, 145-165, 198-218, 233-253, and 274-294; these read LFGT…MGFF, FTPS…LWLM, IVTE…NVGM, PAAI…VIAV, LVAK…GTAL, AICV…LTAM, and VFIY…MFTG.

The protein belongs to the G-protein coupled receptor 1 family.

The protein resides in the host membrane. This is G-protein coupled receptor E6 (E6) from Equus caballus (Horse).